The chain runs to 240 residues: Triosephosphate isomerase (240 aa).

9 to 11 (NWK) contributes to the substrate binding site. The active-site Electrophile is His94. The active-site Proton acceptor is Glu163. Residues Gly169, Ser202, and 223–224 (GG) each bind substrate.

The protein belongs to the triosephosphate isomerase family. In terms of assembly, homodimer.

Its subcellular location is the cytoplasm. The catalysed reaction is D-glyceraldehyde 3-phosphate = dihydroxyacetone phosphate. The protein operates within carbohydrate biosynthesis; gluconeogenesis. Its pathway is carbohydrate degradation; glycolysis; D-glyceraldehyde 3-phosphate from glycerone phosphate: step 1/1. Functionally, involved in the gluconeogenesis. Catalyzes stereospecifically the conversion of dihydroxyacetone phosphate (DHAP) to D-glyceraldehyde-3-phosphate (G3P). This Gloeobacter violaceus (strain ATCC 29082 / PCC 7421) protein is Triosephosphate isomerase.